Reading from the N-terminus, the 238-residue chain is Ribonuclease 3 (238 aa).

An RNase III domain is found at 4-134; sequence PRQALLDAFG…LLGAIYLHHG (131 aa). Residue Glu-44 coordinates Mg(2+). Residue Asp-48 is part of the active site. 2 residues coordinate Mg(2+): Asp-120 and Glu-123. Glu-123 is a catalytic residue. The region spanning 161-229 is the DRBM domain; that stretch reads DWKTSLQELT…ASAAWKALDV (69 aa).

This sequence belongs to the ribonuclease III family. As to quaternary structure, homodimer. Mg(2+) is required as a cofactor.

It is found in the cytoplasm. It catalyses the reaction Endonucleolytic cleavage to 5'-phosphomonoester.. In terms of biological role, digests double-stranded RNA. Involved in the processing of primary rRNA transcript to yield the immediate precursors to the large and small rRNAs (23S and 16S). Processes some mRNAs, and tRNAs when they are encoded in the rRNA operon. Processes pre-crRNA and tracrRNA of type II CRISPR loci if present in the organism. The polypeptide is Ribonuclease 3 (Mycobacterium leprae (strain TN)).